The sequence spans 102 residues: Alpha-hemoglobin-stabilizing protein (102 aa).

Belongs to the AHSP family. As to quaternary structure, monomer. Forms a heterodimer with free alpha-hemoglobin. Does not bind beta-hemoglobin nor alpha(2)beta(2) hemoglobin A. As to expression, expressed in spleen, bone marrow, and blood, with highest levels in bone marrow.

It localises to the cytoplasm. Its function is as follows. Acts as a chaperone to prevent the harmful aggregation of alpha-hemoglobin during normal erythroid cell development. Specifically protects free alpha-hemoglobin from precipitation. The chain is Alpha-hemoglobin-stabilizing protein (Ahsp) from Mus musculus (Mouse).